A 416-amino-acid polypeptide reads, in one-letter code: Inositol polyphosphate multikinase (416 aa).

A disordered region spans residues 1–38; the sequence is MATEPPSPLRVEAPGPPEMRTSPAIESTPEGTPQPAGG. At Ala-2 the chain carries N-acetylalanine. Ser-7 carries the post-translational modification Phosphoserine. Residue Lys-75 coordinates ATP. Substrate is bound at residue Arg-82. Residues 131 to 133 and Asp-144 contribute to the ATP site; that span reads EDV. Substrate contacts are provided by residues Lys-146, 160–167, and Gln-196; that span reads KIQQQVSK. The short motif at 320 to 330 is the Nuclear localization signal element; that stretch reads RHRKIYTKKHH. An ATP-binding site is contributed by Asp-385. A substrate-binding site is contributed by His-388.

It belongs to the inositol phosphokinase (IPK) family. Mg(2+) serves as cofactor. As to expression, ubiquitous, with the highest expression in skeletal muscle, liver, placenta, lung, peripheral blood leukocytes, kidney, spleen and colon.

It localises to the nucleus. The catalysed reaction is 1D-myo-inositol 1,4,5-trisphosphate + 2 ATP = 1D-myo-inositol 1,3,4,5,6-pentakisphosphate + 2 ADP + 2 H(+). It carries out the reaction 1D-myo-inositol 1,3,4,6-tetrakisphosphate + ATP = 1D-myo-inositol 1,3,4,5,6-pentakisphosphate + ADP + H(+). It catalyses the reaction 1-octadecanoyl-2-(5Z,8Z,11Z,14Z)-eicosatetraenoyl-sn-glycero-3-phospho-1D-myo-inositol 4,5-bisphosphate + ATP = 1-octadecanoyl-2-(5Z,8Z,11Z,14Z-eicosatetraenoyl)-sn-glycero-3-phospho-(1D-myo-inositol 3,4,5-triphosphate) + ADP + H(+). The enzyme catalyses a 1,2-diacyl-sn-glycero-3-phospho-(1D-myo-inositol-4,5-bisphosphate) + ATP = a 1,2-diacyl-sn-glycero-3-phospho-(1D-myo-inositol-3,4,5-trisphosphate) + ADP + H(+). The catalysed reaction is 1D-myo-inositol 1,4,5,6-tetrakisphosphate + ATP = 1D-myo-inositol 1,3,4,5,6-pentakisphosphate + ADP + H(+). The protein operates within phospholipid metabolism; phosphatidylinositol metabolism. Its activity is regulated as follows. Inhibited by flavonoids that occupy the ATP-binding pocket. Inhibited by myricetin, quercetin, luteolin, kaempferol, isorhamnetin and diosmetin, and to a lesser degree by rhamnetin and apigenin. Inositol phosphate kinase with a broad substrate specificity. Phosphorylates inositol 1,4,5-trisphosphate (Ins(1,4,5)P3) first to inositol 1,3,4,5-tetrakisphosphate and then to inositol 1,3,4,5,6-pentakisphosphate (Ins(1,3,4,5,6)P5). Phosphorylates inositol 1,3,4,6-tetrakisphosphate (Ins(1,3,4,6)P4). Phosphorylates inositol 1,4,5,6-tetrakisphosphate (Ins(1,4,5,6)P4). Phosphorylates glycero-3-phospho-1D-myo-inositol 4,5-bisphosphate to glycero-3-phospho-1D-myo-inositol 3,4,5-trisphosphate. Plays an important role in MLKL-mediated necroptosis via its role in the biosynthesis of inositol pentakisphosphate (InsP5) and inositol hexakisphosphate (InsP6). Binding of these highly phosphorylated inositol phosphates to MLKL mediates the release of an N-terminal auto-inhibitory region, leading to activation of the kinase. Essential for activated phospho-MLKL to oligomerize and localize to the cell membrane during necroptosis. Required for normal embryonic development, probably via its role in the biosynthesis of inositol 1,3,4,5,6-pentakisphosphate (Ins(1,3,4,5,6)P5) and inositol hexakisphosphate (InsP6). The polypeptide is Inositol polyphosphate multikinase (IPMK) (Homo sapiens (Human)).